A 312-amino-acid chain; its full sequence is L-type lectin-like domain-containing protein C126.08c (312 aa).

Positions Met1–Ala22 are cleaved as a signal peptide. Residues Glu23 to Leu280 lie on the Extracellular side of the membrane. Positions Thr24–Ile248 constitute an L-type lectin-like domain. A helical transmembrane segment spans residues Ile281 to Val301. Topologically, residues Gln302 to Leu312 are cytoplasmic.

Its subcellular location is the membrane. The protein localises to the endoplasmic reticulum. It is found in the golgi apparatus. The protein resides in the vacuole. The sequence is that of L-type lectin-like domain-containing protein C126.08c from Schizosaccharomyces pombe (strain 972 / ATCC 24843) (Fission yeast).